The following is a 775-amino-acid chain: Polyribonucleotide nucleotidyltransferase (775 aa).

Residues Asp-487 and Asp-493 each coordinate Mg(2+). Residues Pro-554–Ile-613 form the KH domain. S1 motif domains are found at residues Gly-623 to Glu-693 and Gly-707 to Val-775.

Belongs to the polyribonucleotide nucleotidyltransferase family. Requires Mg(2+) as cofactor.

It is found in the cytoplasm. The catalysed reaction is RNA(n+1) + phosphate = RNA(n) + a ribonucleoside 5'-diphosphate. In terms of biological role, involved in mRNA degradation. Catalyzes the phosphorolysis of single-stranded polyribonucleotides processively in the 3'- to 5'-direction. This is Polyribonucleotide nucleotidyltransferase from Aquifex aeolicus (strain VF5).